Consider the following 460-residue polypeptide: Proline--tRNA ligase (460 aa).

Belongs to the class-II aminoacyl-tRNA synthetase family. ProS type 3 subfamily. Homodimer.

The protein resides in the cytoplasm. The catalysed reaction is tRNA(Pro) + L-proline + ATP = L-prolyl-tRNA(Pro) + AMP + diphosphate. Its function is as follows. Catalyzes the attachment of proline to tRNA(Pro) in a two-step reaction: proline is first activated by ATP to form Pro-AMP and then transferred to the acceptor end of tRNA(Pro). This Methanococcus maripaludis (strain C7 / ATCC BAA-1331) protein is Proline--tRNA ligase.